The sequence spans 664 residues: Phosphomethylpyrimidine synthase (664 aa).

Composition is skewed to polar residues over residues 1-10 and 17-27; these read MSTEPLSINP and SATQEPSTSSK. The segment at 1-37 is disordered; the sequence is MSTEPLSINPLSAKPLSATQEPSTSSKPSRREQRAAA. Residues N261, M290, Y319, H355, 375-377, 416-419, and E455 contribute to the substrate site; these read SRG and DGLR. Residue H459 coordinates Zn(2+). Y482 provides a ligand contact to substrate. H523 serves as a coordination point for Zn(2+). [4Fe-4S] cluster contacts are provided by C603, C606, and C611.

This sequence belongs to the ThiC family. Homodimer. The cofactor is [4Fe-4S] cluster.

The enzyme catalyses 5-amino-1-(5-phospho-beta-D-ribosyl)imidazole + S-adenosyl-L-methionine = 4-amino-2-methyl-5-(phosphooxymethyl)pyrimidine + CO + 5'-deoxyadenosine + formate + L-methionine + 3 H(+). The protein operates within cofactor biosynthesis; thiamine diphosphate biosynthesis. Functionally, catalyzes the synthesis of the hydroxymethylpyrimidine phosphate (HMP-P) moiety of thiamine from aminoimidazole ribotide (AIR) in a radical S-adenosyl-L-methionine (SAM)-dependent reaction. The sequence is that of Phosphomethylpyrimidine synthase from Pectobacterium atrosepticum (strain SCRI 1043 / ATCC BAA-672) (Erwinia carotovora subsp. atroseptica).